Consider the following 370-residue polypeptide: DNA replication and repair protein RecF (370 aa).

30–37 (GENAQGKT) provides a ligand contact to ATP.

This sequence belongs to the RecF family.

It is found in the cytoplasm. Functionally, the RecF protein is involved in DNA metabolism; it is required for DNA replication and normal SOS inducibility. RecF binds preferentially to single-stranded, linear DNA. It also seems to bind ATP. The sequence is that of DNA replication and repair protein RecF from Bacillus pumilus (strain SAFR-032).